The following is a 37-amino-acid chain: Large ribosomal subunit protein bL36 (37 aa).

It belongs to the bacterial ribosomal protein bL36 family.

The polypeptide is Large ribosomal subunit protein bL36 (Francisella tularensis subsp. tularensis (strain FSC 198)).